The chain runs to 1531 residues: Myosin-17 (1531 aa).

The Myosin N-terminal SH3-like domain maps to 8-57; the sequence is IVGSHVWIEDPGAAWIDGEVVKINGEEVHAHTTNGKTVVANIANVFPKDT. The 671-residue stretch at 62–732 folds into the Myosin motor domain; that stretch reads GGVDDMTKLS…QMAELDARRA (671 aa). ATP contacts are provided by residues 156 to 163 and 209 to 217; these read GESGAGKT and NNNSSRFGK. Actin-binding stretches follow at residues 495–529, 531–554, 589–613, and 613–635; these read LIEK…YQTF, NYKR…AGEV, FPRL…KLQL, and LQSL…KPNN. IQ domains are found at residues 758 to 787, 783 to 812, 806 to 835, 831 to 860, and 854 to 883; these read LRGA…QAAA, RQAA…STIT, IRHS…MKAA, QMKA…AALS, and LQKA…AARD. Residues 884-1056 adopt a coiled-coil conformation; it reads TGALREAKDK…VLRQQALAIS (173 aa). The tract at residues 1071 to 1090 is disordered; it reads LPRTPENGNYLNGGTKTTPD. Over residues 1076–1090 the composition is skewed to polar residues; the sequence is ENGNYLNGGTKTTPD. One can recognise a Dilute domain in the interval 1159 to 1470; sequence DRIIQTIATA…IANMRVMMTE (312 aa). At S1517 the chain carries Phosphoserine.

It belongs to the TRAFAC class myosin-kinesin ATPase superfamily. Myosin family. Plant myosin class XI subfamily. Homodimer. Interacts with MYOB1, MYOB2 and MYOB3. Interacts with PHOX1 and PHOX2. In terms of tissue distribution, expressed ubiquitously.

It localises to the cytoplasm. In terms of biological role, myosin heavy chain that is required for the cell cycle-regulated transport of various organelles and proteins for their segregation. Functions by binding with its tail domain to receptor proteins on organelles and exerting force with its N-terminal motor domain against actin filaments, thereby transporting its cargo along polarized actin cables. Involved in the tip growth of root hair cells and in the elongation of trichome stalk and branches. Plays a major role in trafficking of Golgi stacks, mitochondria and peroxisomes during root hair development. Acts as the primary contributor to ER streaming with a major role in the movement of Golgi bodies. Required for development of pavement cells, trichomes, and stigmatic papillae. Together with XI-F, required for the regulation of organ bending, such as gravitropic root bending. The chain is Myosin-17 from Arabidopsis thaliana (Mouse-ear cress).